Here is a 640-residue protein sequence, read N- to C-terminus: Putative solute carrier organic anion transporter family member 1B7 (640 aa).

The Extracellular segment spans residues 1-16; it reads MKISTTQIERRFEISS. A helical transmembrane segment spans residues 17–37; the sequence is SLVGLIDGSFEIGNLFVIVFV. Residues 38 to 49 lie on the Cytoplasmic side of the membrane; that stretch reads SYFGSKLHRPKL. The helical transmembrane segment at 50 to 70 threads the bilayer; that stretch reads IGIGCFLMGTGSILMALPHFF. The Extracellular segment spans residues 71–123; it reads MGYYRYSKETNIDPSENSTSNLPNCLINQMLSLNRTPSEIIERGCVKESGSHM. The helical transmembrane segment at 124-144 threads the bilayer; the sequence is WIYVFMGNMLRGIGETPIVPL. Over 145-159 the chain is Cytoplasmic; it reads GISYIDDFAKEGHSS. The helical transmembrane segment at 160-180 threads the bilayer; it reads LYLGTVNVMGMTGLVFAFMLG. Over 181 to 211 the chain is Extracellular; it reads SLFAKMYVDIGYVDLSTIRITPKDSRWVGAW. A helical membrane pass occupies residues 212–232; sequence WLGFLVSGIVSIISSIPFFFL. Topologically, residues 233 to 292 are cytoplasmic; it reads PLNPNKPQKERKVSLFLHVLKTNDKRNQIANLTNRRKYITKNVTGFFQSLKSILTNPLYV. Ser246 bears the Phosphoserine mark. Residues 293-313 traverse the membrane as a helical segment; it reads IFVIFTLLHMSSYIASLTYII. Over 314–329 the chain is Extracellular; sequence KMVEQQYGWSASKTNF. Residues 330 to 350 form a helical membrane-spanning segment; sequence LLGVLALPAVAIGMFSGGYII. The Cytoplasmic portion of the chain corresponds to 351–362; the sequence is KKFKLSLVGLAK. The chain crosses the membrane as a helical span at residues 363 to 383; sequence LAFCSATVHLLSQVLYFFLIC. Topologically, residues 384-492 are extracellular; that stretch reads ESKSVAGLTL…CTRKSYVYFV (109 aa). Residues 406–461 enclose the Kazal-like domain; the sequence is DVPLSYCNSECNCDESQWEPVCGNNGITYLSPCLAGCKSSSGNKEPIVFYNCSCVE. Disulfide bonds link Cys412-Cys442, Cys418-Cys438, and Cys427-Cys459. A helical membrane pass occupies residues 493-513; it reads IQVLDAFLCAVGLTSYSVLVI. At 514 to 521 the chain is on the cytoplasmic side; the sequence is RIVQPELK. The chain crosses the membrane as a helical span at residues 522 to 542; it reads ALAIGFHSMIMRSLGGILVPI. Residues 543–577 lie on the Extracellular side of the membrane; sequence YFGALIDTTCMKWSTNSCGARGACRIYNSTYLGRA. Residues 578–598 form a helical membrane-spanning segment; that stretch reads FFGLKVALIFPVLVLLTVFIF. The Cytoplasmic segment spans residues 599-640; that stretch reads VVRKKSHGKDTKVLENERQVMDEANLEFLNDSEHFVPSAEEQ. The residue at position 636 (Ser636) is a Phosphoserine.

This sequence belongs to the organo anion transporter (TC 2.A.60) family.

It is found in the cell membrane. The sequence is that of Putative solute carrier organic anion transporter family member 1B7 (SLCO1B7) from Homo sapiens (Human).